A 139-amino-acid chain; its full sequence is ATP synthase epsilon chain (139 aa).

This sequence belongs to the ATPase epsilon chain family. F-type ATPases have 2 components, CF(1) - the catalytic core - and CF(0) - the membrane proton channel. CF(1) has five subunits: alpha(3), beta(3), gamma(1), delta(1), epsilon(1). CF(0) has three main subunits: a, b and c.

It localises to the cell inner membrane. Its function is as follows. Produces ATP from ADP in the presence of a proton gradient across the membrane. The sequence is that of ATP synthase epsilon chain (atpC) from Escherichia coli O157:H7.